The primary structure comprises 172 residues: NADH-quinone oxidoreductase subunit B (172 aa).

Residues Cys46, Cys47, Cys111, and Cys141 each contribute to the [4Fe-4S] cluster site.

This sequence belongs to the complex I 20 kDa subunit family. NDH-1 is composed of 14 different subunits. Subunits NuoB, C, D, E, F, and G constitute the peripheral sector of the complex. [4Fe-4S] cluster serves as cofactor.

The protein localises to the cell membrane. It catalyses the reaction a quinone + NADH + 5 H(+)(in) = a quinol + NAD(+) + 4 H(+)(out). In terms of biological role, NDH-1 shuttles electrons from NADH, via FMN and iron-sulfur (Fe-S) centers, to quinones in the respiratory chain. The immediate electron acceptor for the enzyme in this species is believed to be a menaquinone. Couples the redox reaction to proton translocation (for every two electrons transferred, four hydrogen ions are translocated across the cytoplasmic membrane), and thus conserves the redox energy in a proton gradient. The chain is NADH-quinone oxidoreductase subunit B from Bacillus cytotoxicus (strain DSM 22905 / CIP 110041 / 391-98 / NVH 391-98).